Reading from the N-terminus, the 367-residue chain is Tetraacyldisaccharide 4'-kinase (367 aa).

Position 68-75 (68-75 (VLGGSGKT)) interacts with ATP.

It belongs to the LpxK family.

It catalyses the reaction a lipid A disaccharide + ATP = a lipid IVA + ADP + H(+). It participates in glycolipid biosynthesis; lipid IV(A) biosynthesis; lipid IV(A) from (3R)-3-hydroxytetradecanoyl-[acyl-carrier-protein] and UDP-N-acetyl-alpha-D-glucosamine: step 6/6. Its function is as follows. Transfers the gamma-phosphate of ATP to the 4'-position of a tetraacyldisaccharide 1-phosphate intermediate (termed DS-1-P) to form tetraacyldisaccharide 1,4'-bis-phosphate (lipid IVA). The sequence is that of Tetraacyldisaccharide 4'-kinase from Chlamydia caviae (strain ATCC VR-813 / DSM 19441 / 03DC25 / GPIC) (Chlamydophila caviae).